A 134-amino-acid polypeptide reads, in one-letter code: MNPLVYFSSSSENSHRFVEKLQLPAIRIPIAGAREKLRVEQPYILLVPSYGGGSPVGAVPIQVIRFLNDVHNRSLIRGVIAAGNTNFGDAYCLAGDIISHKCQVPYLYRFELLGTAEDVANVRKGVTEFWQRQN.

This sequence belongs to the NrdI family.

Its function is as follows. Probably involved in ribonucleotide reductase function. The polypeptide is Protein NrdI (Yersinia pseudotuberculosis serotype O:1b (strain IP 31758)).